The following is a 260-amino-acid chain: Proline-rich protein 33 (260 aa).

Residues 29 to 132 (GVQTVSPRPE…KVAPKPSRSG (104 aa)) are disordered. Over residues 73–83 (GPSPYSPPPAA) the composition is skewed to pro residues.

This is Proline-rich protein 33 (Prr33) from Mus musculus (Mouse).